Reading from the N-terminus, the 580-residue chain is RuBisCO large subunit-binding protein subunit alpha, chloroplastic (580 aa).

The span at 1-17 (MAQSQLAKGSRQTTGRP) shows a compositional bias: polar residues. Residues 1–24 (MAQSQLAKGSRQTTGRPFQNKPAR) are disordered.

It belongs to the chaperonin (HSP60) family. In terms of assembly, oligomer of probably six alpha and six beta subunits.

It localises to the plastid. It is found in the chloroplast. This protein binds RuBisCO small and large subunits and is implicated in the assembly of the enzyme oligomer. The chain is RuBisCO large subunit-binding protein subunit alpha, chloroplastic from Chlamydomonas reinhardtii (Chlamydomonas smithii).